The following is a 1866-amino-acid chain: Rho GTPase-activating protein 100F (1866 aa).

Disordered stretches follow at residues 22-98 (MLCC…AGVK), 262-336 (RRGN…NNYS), and 466-530 (LRSS…DTEA). A compositionally biased stretch (low complexity) spans 59 to 77 (GNQQHHGNQQHHGNQQQHH). Residues 179-264 (LVEIVKRPGQ…LVLAIRQRRG (86 aa)) enclose the PDZ domain. The segment covering 271 to 286 (PGPPTLSRPEQKPPPV) has biased composition (pro residues). The span at 301–326 (TDRMPRPRSSRDRRTGDGREMTESRS) shows a compositional bias: basic and acidic residues. Ser719 bears the Phosphoserine mark. The interval 745–775 (AGPASPSGSILSTGGHQSPAPTPSATLPRPH) is disordered. Residues 750-760 (PSGSILSTGGH) show a composition bias toward polar residues. The 120-residue stretch at 789 to 908 (KLDKPIVDIG…LRQSPLHQLA (120 aa)) folds into the C2 domain. In terms of domain architecture, Rho-GAP spans 948–1148 (ADLETVVNRE…YLLQIWPQPQ (201 aa)). Disordered stretches follow at residues 1273-1328 (GGSV…QVKI), 1356-1380 (PTTQ…RRGN), 1393-1479 (SVVN…DLVS), 1514-1607 (FTPI…MVST), 1644-1727 (YTND…YGTL), and 1819-1840 (DEKP…ADKG). Residues 1282-1292 (DPSPLPLPGTP) show a composition bias toward pro residues. Positions 1293-1302 (SPGSSSASTG) are enriched in low complexity. Composition is skewed to polar residues over residues 1356-1377 (PTTQ…TASR), 1393-1408 (SVVN…YTGS), and 1416-1429 (GNSS…NASG). Over residues 1443–1479 (SSATSSSSSSQATVLSAGSTATSAPTTSSDDSDDLVS) the composition is skewed to low complexity. Positions 1538–1587 (QLVTPISGSSSKPGATTGAISKYTTGSVESSINANSQKLSSPSRLCNSKD) are enriched in polar residues. Composition is skewed to low complexity over residues 1590 to 1607 (SRTG…MVST) and 1644 to 1658 (YTND…SSKS). The segment covering 1659 to 1670 (GIGGGSGTGLGA) has biased composition (gly residues). Composition is skewed to low complexity over residues 1671–1688 (VSGA…LFGS) and 1696–1720 (GSSH…NHNT). Positions 1830-1839 (HGEEKLGADK) are enriched in basic and acidic residues.

Interacts (via PDZ domain) with Nrx-1; may recruit Nrx-1 to the presynaptic active zone.

It localises to the presynapse. In terms of biological role, GTPase activator for the Rho-type GTPases by converting them to an inactive GDP-bound state. Promotes the anchoring of Liprin-alpha clusters at synapses. Recruits and keeps Nrx-1 levels high in active zones in the presynapse opposite the postsynaptic region. This chain is Rho GTPase-activating protein 100F (RhoGAP100F), found in Drosophila melanogaster (Fruit fly).